The primary structure comprises 211 residues: MNLEDIRREYLLGGLNREDLLPNPIDQFNVWLEQAIASGVPDPTAMTLATVSKSGQPSQRIVLLKHLDQRGFVFFTNYRSHKAEDIAGNPCVSLHFPWHFMERQVKVQGEAVKISTAETLKYFLTRPRESQLAAWASEQSQRIDSRKALLSQFEAMKAKFTKGEIPLPDFWGGYVVKPQAIEFWQGGASRLHDRFLYCNENGSWQISRLAP.

Substrate-binding positions include Arg7–Tyr10 and Lys65. Residues Arg60–Lys65, Phe75–Thr76, Lys82, and Gln104 each bind FMN. Positions 122, 126, and 130 each coordinate substrate. Residues Gln139–Ser140 and Trp184 contribute to the FMN site. Residue Arg190–His192 participates in substrate binding. Arg194 lines the FMN pocket.

The protein belongs to the pyridoxamine 5'-phosphate oxidase family. As to quaternary structure, homodimer. It depends on FMN as a cofactor.

The enzyme catalyses pyridoxamine 5'-phosphate + O2 + H2O = pyridoxal 5'-phosphate + H2O2 + NH4(+). It catalyses the reaction pyridoxine 5'-phosphate + O2 = pyridoxal 5'-phosphate + H2O2. It participates in cofactor metabolism; pyridoxal 5'-phosphate salvage; pyridoxal 5'-phosphate from pyridoxamine 5'-phosphate: step 1/1. The protein operates within cofactor metabolism; pyridoxal 5'-phosphate salvage; pyridoxal 5'-phosphate from pyridoxine 5'-phosphate: step 1/1. Catalyzes the oxidation of either pyridoxine 5'-phosphate (PNP) or pyridoxamine 5'-phosphate (PMP) into pyridoxal 5'-phosphate (PLP). The protein is Pyridoxine/pyridoxamine 5'-phosphate oxidase of Teredinibacter turnerae (strain ATCC 39867 / T7901).